Reading from the N-terminus, the 302-residue chain is Putative T-box protein 34 (302 aa).

Positions 5-180 form a DNA-binding region, T-box; sequence IVNEHKYREL…KMNLAPGSSQ (176 aa).

The protein resides in the nucleus. This chain is Putative T-box protein 34 (tbx-34), found in Caenorhabditis elegans.